A 75-amino-acid chain; its full sequence is Beta-defensin 42 (75 aa).

Positions 1–21 (MNLRLSCLLFILVTSLPAGRC) are cleaved as a signal peptide. 3 cysteine pairs are disulfide-bonded: cysteine 33–cysteine 60, cysteine 40–cysteine 54, and cysteine 44–cysteine 61.

It belongs to the beta-defensin family. Epididymis-specific, with highest levels in the initial segment and distal caput.

Its subcellular location is the secreted. Functionally, has bactericidal activity. May play a role in the antimicrobial protection of sperm and urogenital tract epithelia. The chain is Beta-defensin 42 from Mus musculus (Mouse).